The chain runs to 44 residues: uncharacterized protein (44 aa).

Residues 19–39 (AVGFVVSFGFFAFLFVMATVI) form a helical membrane-spanning segment.

The protein resides in the cell membrane. This is an uncharacterized protein from Bacillus subtilis (strain 168).